The chain runs to 602 residues: UvrABC system protein C (602 aa).

In terms of domain architecture, GIY-YIG spans 17-94 (TTSGCYKMYS…IKEYKPDYNI (78 aa)). One can recognise a UVR domain in the interval 199–234 (SKLLDETEIKMKEAIKKEDFEAAIKLKETKRSLIEI).

It belongs to the UvrC family. Interacts with UvrB in an incision complex.

The protein resides in the cytoplasm. Its function is as follows. The UvrABC repair system catalyzes the recognition and processing of DNA lesions. UvrC both incises the 5' and 3' sides of the lesion. The N-terminal half is responsible for the 3' incision and the C-terminal half is responsible for the 5' incision. This is UvrABC system protein C from Borrelia hermsii (strain HS1 / DAH).